The sequence spans 426 residues: Chordin-like protein 2 (426 aa).

The signal sequence occupies residues 1 to 25 (MVPGVRIIPSLLGLVMFWLPLDSQA). VWFC domains follow at residues 31–96 (KVCL…PRCV) and 109–175 (KSCQ…QTCK). N-linked (GlcNAc...) asparagine glycosylation occurs at asparagine 114. Residue serine 182 is modified to Phosphoserine. The segment covering 182–191 (STEENLTQLQ) has biased composition (polar residues). The interval 182-216 (STEENLTQLQHGERHSQDPCSERRGPSTPAPTSLS) is disordered. Asparagine 186 carries an N-linked (GlcNAc...) asparagine glycan. Basic and acidic residues predominate over residues 192-206 (HGERHSQDPCSERRG). The span at 207 to 216 (PSTPAPTSLS) shows a compositional bias: low complexity. The 66-residue stretch at 246–311 (KACTHNGKTY…VAGKCCKICP (66 aa)) folds into the VWFC 3 domain.

Interacts with GDF5. May interact with INHBA, BMP2, BMP4, BMP5, BMP6, and BMP7. In terms of tissue distribution, weakly expressed in the liver and kidney. In reproductive organs expressed in connective tissues such as ligaments of the ovary and oviduct in females, and of testis, epididymis and certain male accessory sex glands in males. Expression was high in uterine myometrium. Weakly expressed in cartilage of the femoral head, patella, articular facets of vertebrae, in the annulus fibrosus of intervertebral disks. In normal cartilage, expression was confined to articular chondrocytes especially in the superficial zone.

Its subcellular location is the secreted. Functionally, implicated in tumor angiogenesis. May inhibits BMPs activity by blocking their interaction with their receptors. Has a negative regulator effect on the cartilage formation/regeneration from immature mesenchymal cells, by preventing or reducing the rate of matrix accumulation. May play a role during myoblast and osteoblast differentiation, and maturation. In Mus musculus (Mouse), this protein is Chordin-like protein 2 (Chrdl2).